A 1041-amino-acid chain; its full sequence is Toll-like receptor 8 (1041 aa).

Residues 1–26 (MENMFLQSSMLTCIFLLISGSCELCA) form the signal peptide. Topologically, residues 27-827 (EENFSRSYPC…ELTTCVSDVT (801 aa)) are extracellular. Asn-29, Asn-42, Asn-80, Asn-88, and Asn-115 each carry an N-linked (GlcNAc...) asparagine glycan. Cys-36 and Cys-49 are oxidised to a cystine. 6 LRR repeats span residues 126-147 (NLRE…LPES), 148-168 (LTEL…GISR), 171-193 (NLKN…TNIE), 202-223 (NLEL…LPSS), 224-244 (LRKL…DFKG), and 247-268 (NLTL…FPCV). A glycan (N-linked (GlcNAc...) asparagine) is linked at Asn-160. Cysteines 181 and 187 form a disulfide. The N-linked (GlcNAc...) asparagine glycan is linked to Asn-247. 2 disulfides stabilise this stretch: Cys-257-Cys-270 and Cys-260-Cys-267. N-linked (GlcNAc...) asparagine glycosylation is found at Asn-285 and Asn-293. LRR repeat units lie at residues 288-309 (QLRY…WFKN), 312-334 (HLKV…AFLT), and 338-360 (RLEI…INIS). N-linked (GlcNAc...) asparagine glycosylation is found at Asn-358 and Asn-362. 3 LRR repeats span residues 368-389 (SLRA…DFQP), 395-416 (NLST…LFQN), and 419-440 (NLEI…TRQS). Asn-395 and Asn-416 each carry an N-linked (GlcNAc...) asparagine glycan. The N-linked (GlcNAc...) asparagine glycan is linked to Asn-443. A disulfide bridge connects residues Cys-479 and Cys-509. LRR repeat units lie at residues 482 to 503 (YGKA…QFEN), 506 to 527 (DIAC…TEFS), 531 to 551 (HVKY…SALT), and 555 to 577 (DLEV…THHL). N-linked (GlcNAc...) asparagine glycans are attached at residues Asn-511 and Asn-546. N-linked (GlcNAc...) asparagine glycosylation is found at Asn-582 and Asn-590. LRR repeat units follow at residues 585–606 (NLKV…YNLE), 609–630 (SLVE…DDNR), 640–661 (NLTR…AFLN), 665–685 (SLTE…TLLQ), 689–710 (RLEL…LSDF), 713–734 (SLRT…FLSE), and 737–758 (SLKH…ALET). 2 N-linked (GlcNAc...) asparagine glycosylation sites follow: Asn-640 and Asn-680. Residue Asn-752 is glycosylated (N-linked (GlcNAc...) asparagine). Positions 772–824 (NPFECTCDIGDFRRWMDEHLNVKIPRLVDVICASPGDQRGKSIVSLELTTCVS) constitute an LRRCT domain. Cysteines 776 and 803 form a disulfide. The helical transmembrane segment at 828–848 (AVILFFFTFFITTMVMLAALA) threads the bilayer. Residues 849-1041 (HHLFYWDVWF…NMYVDSIKQY (193 aa)) lie on the Cytoplasmic side of the membrane. A TIR domain is found at 878-1022 (TFYDAYISYD…LFWQTLRNVV (145 aa)).

This sequence belongs to the Toll-like receptor family. As to quaternary structure, homodimer. Interacts with MYD88 via their respective TIR domains. Interacts with UNC93B1. Interacts with BTK. Interacts with SMPDL3B. Post-translationally, ubiquitinated by RNF216; leading to degradation by the proteasome. Proteolytic processing occurs in monocytes and monocyte-derived macrophages by both furin-like proprotein convertase and cathepsins. The cleavage is necessary for dimer formation and subsequent activation. As to expression, expressed in myeloid dendritic cells, monocytes, and monocyte-derived dendritic cells.

Its subcellular location is the endosome membrane. Its activity is regulated as follows. Activated by RNAs having enough uridines. In terms of biological role, endosomal receptor that plays a key role in innate and adaptive immunity. Controls host immune response against pathogens through recognition of RNA degradation products specific to microorganisms that are initially processed by RNASET2. Recognizes GU-rich single-stranded RNA (GU-rich RNA) derived from SARS-CoV-2, SARS-CoV-1 and HIV-1 viruses. Upon binding to agonists, undergoes dimerization that brings TIR domains from the two molecules into direct contact, leading to the recruitment of TIR-containing downstream adapter MYD88 through homotypic interaction. In turn, the Myddosome signaling complex is formed involving IRAK4, IRAK1, TRAF6, TRAF3 leading to activation of downstream transcription factors NF-kappa-B and IRF7 to induce pro-inflammatory cytokines and interferons, respectively. This Homo sapiens (Human) protein is Toll-like receptor 8.